Here is a 96-residue protein sequence, read N- to C-terminus: Putative pterin-4-alpha-carbinolamine dehydratase (96 aa).

Belongs to the pterin-4-alpha-carbinolamine dehydratase family.

The enzyme catalyses (4aS,6R)-4a-hydroxy-L-erythro-5,6,7,8-tetrahydrobiopterin = (6R)-L-erythro-6,7-dihydrobiopterin + H2O. This chain is Putative pterin-4-alpha-carbinolamine dehydratase, found in Prochlorococcus marinus subsp. pastoris (strain CCMP1986 / NIES-2087 / MED4).